Reading from the N-terminus, the 462-residue chain is Sugar transporter ERD6-like 12 (462 aa).

Transmembrane regions (helical) follow at residues 25–45, 62–82, 101–121, 124–144, 151–171, 179–199, 262–282, 297–317, 326–346, 358–378, 399–419, and 424–444; these read LLIF…AAIG, LAQF…GAIF, LFCI…WLDM, FLVG…IAEI, GAFT…VYYF, TLAI…FFIP, LTIG…GISS, IGMM…LILV, LMTS…AFGV, IFCF…MGAL, VTIA…FMLV, and GTFI…WCLV.

It belongs to the major facilitator superfamily. Sugar transporter (TC 2.A.1.1) family.

The protein localises to the membrane. Sugar transporter. This chain is Sugar transporter ERD6-like 12 (SUGTL5), found in Arabidopsis thaliana (Mouse-ear cress).